Here is a 112-residue protein sequence, read N- to C-terminus: Keratin-associated protein 12-4 (112 aa).

A run of 15 repeats spans residues 10 to 14, 20 to 24, 25 to 29, 35 to 39, 41 to 45, 46 to 50, 56 to 60, 61 to 65, 66 to 70, 71 to 75, 76 to 80, 81 to 85, 86 to 90, 91 to 95, and 96 to 100. The segment at 10–100 is 15 X 5 AA approximate repeats; that stretch reads CPMACPGSPC…CCQPFCPTLV (91 aa).

The protein belongs to the KRTAP type 12 family. As to quaternary structure, interacts with hair keratins. Restricted to a narrow region of the hair fiber cuticle, lying approximately 20 cell layers above the apex of the dermal papilla of the hair root; not detected in any other tissues.

Its function is as follows. In the hair cortex, hair keratin intermediate filaments are embedded in an interfilamentous matrix, consisting of hair keratin-associated proteins (KRTAP), which are essential for the formation of a rigid and resistant hair shaft through their extensive disulfide bond cross-linking with abundant cysteine residues of hair keratins. The matrix proteins include the high-sulfur and high-glycine-tyrosine keratins. This chain is Keratin-associated protein 12-4 (KRTAP12-4), found in Homo sapiens (Human).